Consider the following 402-residue polypeptide: Acyl-[acyl-carrier-protein] desaturase 3, chloroplastic (402 aa).

Disordered regions lie at residues methionine 1–serine 25 and valine 38–leucine 66. A chloroplast-targeting transit peptide spans methionine 1–methionine 32. Fe cation-binding residues include glutamate 139, glutamate 178, histidine 181, glutamate 231, glutamate 264, and histidine 267.

It belongs to the fatty acid desaturase type 2 family. In terms of assembly, homodimer. Fe(2+) serves as cofactor.

The protein localises to the plastid. It localises to the chloroplast. Its pathway is lipid metabolism; fatty acid metabolism. Its function is as follows. Introduces a cis double bond in the acyl chain of an acyl-[acyl-carrier protein]. The sequence is that of Acyl-[acyl-carrier-protein] desaturase 3, chloroplastic from Oryza sativa subsp. indica (Rice).